A 602-amino-acid chain; its full sequence is ATP-dependent zinc metalloprotease FtsH 3 (602 aa).

Residues 1–18 (MNSWFLQVSKRLGPAGRR) lie on the Cytoplasmic side of the membrane. The helical transmembrane segment at 19 to 39 (LWLLGFMGVVLAVTLGLALRA) threads the bilayer. The Periplasmic segment spans residues 40-117 (ARESATQRTA…DFASREDPSR (78 aa)). The chain crosses the membrane as a helical span at residues 118 to 138 (AASAVLPVVVLAAVGFALFTV). Over 139–602 (SRRRSPKVFS…RRPRPEDQAA (464 aa)) the chain is Cytoplasmic. An ATP-binding site is contributed by 202 to 209 (GEPGTGKT). His-425 provides a ligand contact to Zn(2+). Residue Glu-426 is part of the active site. His-429 and Asp-501 together coordinate Zn(2+).

In the central section; belongs to the AAA ATPase family. It in the C-terminal section; belongs to the peptidase M41 family. Homohexamer. The cofactor is Zn(2+).

Its subcellular location is the cell inner membrane. Functionally, acts as a processive, ATP-dependent zinc metallopeptidase for both cytoplasmic and membrane proteins. Plays a role in the quality control of integral membrane proteins. The polypeptide is ATP-dependent zinc metalloprotease FtsH 3 (Sorangium cellulosum (strain So ce56) (Polyangium cellulosum (strain So ce56))).